Reading from the N-terminus, the 375-residue chain is MQAVIQTGPGTLQLTENVPKPSVEPGSRKVLVKVHAVALNHSDWKMVDFSAKPGAISGYDMAGVLEAIDDSMNSDLAVGDRVLGVTSIHGGAFAEYVVTDGDLLVKIPENMDFQHAASYGVGIVTTGLALYGNECLALNWPNTDGTGSAAPQKTRVGPRGWSGGDALTDNDNETPRIPVLVYGASTSTGTLAIQLLKLSGYEPIAVCSPHNFGLVQSRGASKCFDYHSQGCGAMIKQYTYNRLEYALDCITTASSMRLCYEAIGATGGKYVSLDPFNARVQRSRADVKPFFCYALTIFGLPIELSGEFARGAKPEDRKLAEKFVKIAEKLIEKGRLKAHPTMLKSGGLGGIASSIDLLRKGKVSGSKLVFDVVGN.

Positions 1–16 (MQAVIQTGPGTLQLTE) are enriched in polar residues. Residues 1 to 21 (MQAVIQTGPGTLQLTENVPKP) are disordered. Position 42-45 (42-45 (SDWK)) interacts with NADP(+). A substrate-binding site is contributed by 121–128 (VGIVTTGL). Residues 147 to 168 (GSAAPQKTRVGPRGWSGGDALT) form a disordered region. NADP(+) is bound by residues 185-188 (STST), 208-211 (SPHN), Tyr226, and 273-274 (LD). 294–298 (ALTIF) contributes to the substrate binding site. 363-364 (VS) is a binding site for NADP(+).

Belongs to the zinc-containing alcohol dehydrogenase family. Monomer.

Its pathway is polyketide biosynthesis. Trans-enoyl reductase; part of the gene cluster A that mediates the biosynthesis of botcinic acid and its botcinin derivatives, acetate-derived polyketides that contribute to virulence when combined with the sesquiterpene botrydial. Botcinic acid and its derivatives have been shown to induce chlorosis and necrosis during host plant infection, but also have antifungal activities. Two polyketide synthases, BOA6 and BOA9, are involved in the biosynthesis of botcinins. BOA6 mediates the formation of the per-methylated tetraketide core by condensation of four units of malonyl-CoA with one unit of acetyl-CoA, which would be methylated in activated methylene groups to yield a bicyclic acid intermediate that could then either be converted to botrylactone derivatives or lose the starter acetate unit through a retro-Claisen type C-C bond cleavage to yield botcinin derivatives. The second polyketide synthase, BOA9, is probably required for the biosynthesis of the tetraketide side chain of botcinins. The methyltransferase (MT) domain within BOA6 is probably responsible for the incorporation of four methyl groups. The trans-enoyl reductase BOA5 might take over the enoyl reductase function of BOA6 that misses an ER domain. The monooxygenases BOA2, BOA3 and BOA4 might be involved in further hydroxylations at C4, C5 and C8, whereas BOA7, close to BOA9, could potentially be involved in the hydroxylation at C4 in the side chain of botcinins. The protein is Trans-enoyl reductase BOA5 of Botryotinia fuckeliana (strain B05.10) (Noble rot fungus).